The chain runs to 460 residues: Argininosuccinate lyase (460 aa).

The protein belongs to the lyase 1 family. Argininosuccinate lyase subfamily.

It is found in the cytoplasm. The catalysed reaction is 2-(N(omega)-L-arginino)succinate = fumarate + L-arginine. Its pathway is amino-acid biosynthesis; L-arginine biosynthesis; L-arginine from L-ornithine and carbamoyl phosphate: step 3/3. The protein is Argininosuccinate lyase of Streptococcus sanguinis (strain SK36).